The primary structure comprises 616 residues: MGKIIGIDLGTTNSCVAVMEGGEPVVITNSEGARTTPSVVSFQADGERLVGQVAKRQSITNPDKTIISIKRHMGTSYKVDIDGKNYSPQEISAMVLQKIKADAESYLGESVTQAVITVPAYFNDSERQATKDAGKIAGLEVLRIINEPTAAALAYGLDKMDSNHKILVYDLGGGTFDVSILELGDGVFEVLSTNGDTKLGGDDFDQKVMDYIAETFKAENGIDLRQDKMALQRLKEAAEKAKIELSSSMQTNINLPFITADATGPKHIDLNLTRAKFNEITHDLVQRSIEPMKKALSDAAISIDEIEKIILVGGSTRIPAVVEAVKNFTGKDPSKGVNPDECVAVGAAVQAGVLTGEVKDVLLLDVTPLTLGIETAGGIATPLIERNTTIPTKKSQIFSTAADSQTSVEINVVQGERQMAMDNKSLGRFTLSGIAPAPRGIPQIEVTFDIDANGIVKVSALDKGTGKEANITITASTNLNDEEIDKAVKEAEKFAEEDKKRKEKVETLNNADQLIYQTEKALTELGDKVSAEDKAKVTEKLEALKAIKDGEDLEAIKKATEELTQEFYAVSSKVYAAAGGDPSQAGGFDPNAAGGAQQAPHDDNVVDADFKVDDDK.

A Phosphothreonine; by autocatalysis modification is found at Thr175. Residues 579-605 (GGDPSQAGGFDPNAAGGAQQAPHDDNV) form a disordered region.

This sequence belongs to the heat shock protein 70 family.

Acts as a chaperone. This chain is Chaperone protein DnaK, found in Clostridium botulinum (strain Alaska E43 / Type E3).